Consider the following 255-residue polypeptide: Small ribosomal subunit protein uS2 (255 aa).

The segment at 232–255 is disordered; it reads ASGRDLGASEEVPVEPALEEASEA.

This sequence belongs to the universal ribosomal protein uS2 family.

This chain is Small ribosomal subunit protein uS2, found in Rhizobium meliloti (strain 1021) (Ensifer meliloti).